A 207-amino-acid polypeptide reads, in one-letter code: Anthranilate synthase component II (207 aa).

The Glutamine amidotransferase type-1 domain maps to 17–207; sequence RVLFVDNFDS…DVIRNFLAGL (191 aa). Residue 66–68 coordinates L-glutamine; sequence GPG. Cysteine 96 acts as the Nucleophile; for GATase activity in catalysis. 146–147 lines the L-glutamine pocket; that stretch reads SL. Active-site residues include histidine 187 and glutamate 189.

Tetramer of two components I and two components II.

The enzyme catalyses chorismate + L-glutamine = anthranilate + pyruvate + L-glutamate + H(+). The protein operates within amino-acid biosynthesis; L-tryptophan biosynthesis; L-tryptophan from chorismate: step 1/5. The polypeptide is Anthranilate synthase component II (trpG1) (Haloarcula marismortui (strain ATCC 43049 / DSM 3752 / JCM 8966 / VKM B-1809) (Halobacterium marismortui)).